The following is a 190-amino-acid chain: Adenylate kinase (190 aa).

12-17 is a binding site for ATP; it reads GSGKTT. The NMP stretch occupies residues 34-63; the sequence is STGDLLREEVASGSEYGKTIDSFISKGNLV. AMP is bound by residues Thr35, Arg40, 61–63, 88–91, and Gln95; these read NLV and GYPR. The tract at residues 130-136 is LID; sequence GRARGAD. Residue Arg131 participates in ATP binding. Arg133 and Arg145 together coordinate AMP. An ATP-binding site is contributed by Arg173.

Belongs to the adenylate kinase family. As to quaternary structure, monomer.

The protein resides in the cytoplasm. It carries out the reaction AMP + ATP = 2 ADP. The protein operates within purine metabolism; AMP biosynthesis via salvage pathway; AMP from ADP: step 1/1. Catalyzes the reversible transfer of the terminal phosphate group between ATP and AMP. Plays an important role in cellular energy homeostasis and in adenine nucleotide metabolism. This is Adenylate kinase from Helicobacter hepaticus (strain ATCC 51449 / 3B1).